Reading from the N-terminus, the 207-residue chain is Thymidylate kinase (207 aa).

Position 9–16 (9–16 (GGEGCGKS)) interacts with ATP.

This sequence belongs to the thymidylate kinase family.

It carries out the reaction dTMP + ATP = dTDP + ADP. Its function is as follows. Phosphorylation of dTMP to form dTDP in both de novo and salvage pathways of dTTP synthesis. The chain is Thymidylate kinase from Dehalococcoides mccartyi (strain ATCC BAA-2266 / KCTC 15142 / 195) (Dehalococcoides ethenogenes (strain 195)).